Consider the following 312-residue polypeptide: Tumor necrosis factor receptor type 1-associated DEATH domain protein (312 aa).

The short motif at L147–K163 is the Nuclear export signal element. A disordered region spans residues G170–P195. A Death domain is found at P179–L289. Over residues L180–P195 the composition is skewed to pro residues. The segment at F222–L289 is interaction with KRT14 and KRT18. Positions R231–L244 match the Nuclear localization signal motif. 2 (Microbial infection) N-beta-linked (GlcNAc) arginine glycosylation sites follow: R235 and R245.

As to quaternary structure, stimulation of TNF-alpha receptor TNFRSF1A leads to the formation of two distinct signaling complexes. Plasma membrane-bound complex I is composed of TNFRSF1A, TRADD, RIPK1, TRAF2 and BIRC2/c-IAP1 or BIRC3 which interacts with CHUCK/IKK-alpha, IKBKB/IKK-beta and IKBKG/IKK-gamma promoting cell survival. Subsequently, TRADD, RIPK1 and TRAF2 dissociate from TNFRSF1A and form cytoplasmic complex II with FADD and caspase CASP8 promoting cell apoptosis. Within complex I, interacts with TNFRSF1A/TNFR1, TRAF2 and kinase RIPK1. Within complex I, interacts with TRPC4AP; the interaction promotes NF-kappa B activation. UXT1 associates with complex I; the interaction prevents the formation of complex II. Within complex I Interacts with scaffold protein DAB2IP. Interacts with autophagy receptor SQSTM1. Interacts with E3 ligase TRIP12. Interacts with kinase HIPK2. Interacts with keratin KRT14. Interacts with keratin KRT18. Interacts with keratins KRT16 and KRT17. Interacts with FADD. Interacts with TOMM70. Interacts with TMC8; the interaction impairs the formation of complex I and facilites complex II formation. (Microbial infection) Glycosylated at Arg-235 by enteropathogenic E.coli protein NleB1, C.rodentium protein NleB and S.typhimurium proteins Ssek1 and Ssek3: arginine GlcNAcylation prevents homotypic/heterotypic death domain interactions and assembly of the oligomeric TNFRSF1A/TNFR1 complex, thereby disrupting TNF signaling. In terms of tissue distribution, found in all examined tissues.

Its subcellular location is the nucleus. The protein resides in the cytoplasm. The protein localises to the cytoskeleton. Adapter molecule for TNFRSF1A/TNFR1 that specifically associates with the cytoplasmic domain of activated TNFRSF1A/TNFR1 mediating its interaction with FADD. Overexpression of TRADD leads to two major TNF-induced responses, apoptosis and activation of NF-kappa-B. The nuclear form acts as a tumor suppressor by preventing ubiquitination and degradation of isoform p19ARF/ARF of CDKN2A by TRIP12: acts by interacting with TRIP12, leading to disrupt interaction between TRIP12 and isoform p19ARF/ARF of CDKN2A. In Homo sapiens (Human), this protein is Tumor necrosis factor receptor type 1-associated DEATH domain protein.